A 153-amino-acid polypeptide reads, in one-letter code: Virion assembly protein OPG100 (153 aa).

This sequence belongs to the orthopoxvirus OPG100 family. As to quaternary structure, homodimer. Part of a complex composed of the kinase OPG054, OPG092, OPG114, OPG115, OPG142 and OPG157. Interacts with OPG175.

It is found in the virion. The protein resides in the host cytoplasm. In terms of biological role, late protein which is a part of a large complex required for early virion morphogenesis. This complex participates in the formation of virosomes and the incorporation of virosomal contents into nascent immature virions. Plays a role in DNA packaging during immature virions (IV) formation. The chain is Virion assembly protein OPG100 (OPG100) from Vaccinia virus (strain Copenhagen) (VACV).